Here is a 476-residue protein sequence, read N- to C-terminus: Adenosylhomocysteinase (476 aa).

T67, D142, and E202 together coordinate substrate. Position 203-205 (203-205 (TTT)) interacts with NAD(+). 2 residues coordinate substrate: K232 and D236. NAD(+) contacts are provided by residues N237, 266 to 271 (GYGDVG), E289, N324, 345 to 347 (IGH), and N390.

Belongs to the adenosylhomocysteinase family. It depends on NAD(+) as a cofactor.

It is found in the cytoplasm. The catalysed reaction is S-adenosyl-L-homocysteine + H2O = L-homocysteine + adenosine. It functions in the pathway amino-acid biosynthesis; L-homocysteine biosynthesis; L-homocysteine from S-adenosyl-L-homocysteine: step 1/1. Its function is as follows. May play a key role in the regulation of the intracellular concentration of adenosylhomocysteine. The polypeptide is Adenosylhomocysteinase (Synechococcus sp. (strain WH7803)).